A 310-amino-acid polypeptide reads, in one-letter code: Mycothiol acetyltransferase (310 aa).

2 N-acetyltransferase domains span residues 5–155 (TTVE…HPAR) and 160–309 (PPFR…LPAA). Position 80–82 (80–82 (LLV)) interacts with acetyl-CoA. The 1D-myo-inositol 2-(L-cysteinylamino)-2-deoxy-alpha-D-glucopyranoside site is built by Asp187, Lys226, and Glu238. 242-244 (IAT) is an acetyl-CoA binding site. Tyr276 provides a ligand contact to 1D-myo-inositol 2-(L-cysteinylamino)-2-deoxy-alpha-D-glucopyranoside. Acetyl-CoA is bound at residue 281 to 286 (NERALR).

The protein belongs to the acetyltransferase family. MshD subfamily. In terms of assembly, monomer.

It carries out the reaction 1D-myo-inositol 2-(L-cysteinylamino)-2-deoxy-alpha-D-glucopyranoside + acetyl-CoA = mycothiol + CoA + H(+). Catalyzes the transfer of acetyl from acetyl-CoA to desacetylmycothiol (Cys-GlcN-Ins) to form mycothiol. This chain is Mycothiol acetyltransferase, found in Acidimicrobium ferrooxidans (strain DSM 10331 / JCM 15462 / NBRC 103882 / ICP).